The sequence spans 60 residues: Large ribosomal subunit protein bL32 (60 aa).

This sequence belongs to the bacterial ribosomal protein bL32 family.

This is Large ribosomal subunit protein bL32 from Streptococcus pneumoniae serotype 19F (strain G54).